The sequence spans 700 residues: Lutropin-choriogonadotropic hormone receptor (700 aa).

The signal sequence occupies residues 1-26 (MGRRVPALRQLLVLAMLVLKQSQLHS). The Extracellular segment spans residues 27 to 362 (PELSGSRCPE…AFNPCEDIMG (336 aa)). Residues 52-75 (RAGLARLSLTYLPVKVIPSQAFRG) form an LRR 1 repeat. An N-linked (GlcNAc...) asparagine glycan is attached at N103. LRR repeat units lie at residues 126–150 (LPRL…KISS), 176–200 (MNNE…AFNG), and 225–248 (ATGP…GLES). Residues N178 and N199 are each glycosylated (N-linked (GlcNAc...) asparagine). N-linked (GlcNAc...) asparagine glycans are attached at residues N295, N303, and N317. Residue Y335 is modified to Sulfotyrosine. A helical transmembrane segment spans residues 363–390 (YAFLRVLIWLINILAIFGNLTVLFVLLT). Topologically, residues 391 to 399 (SRYKLTVPR) are cytoplasmic. A helical transmembrane segment spans residues 400-422 (FLMCNLSFADFCMGLYLLLIASV). Topologically, residues 423-443 (DSQTKGQYYNHAIDWQTGSGC) are extracellular. C443 and C518 are oxidised to a cystine. The helical transmembrane segment at 444-466 (SAAGFFTVFASELSVYTLTVITL) threads the bilayer. Residues 467–486 (ERWHTITYAVQLDQKLRLRH) are Cytoplasmic-facing. A helical membrane pass occupies residues 487 to 509 (AIPIMLGGWIFSTLMATLPLVGV). The Extracellular portion of the chain corresponds to 510–529 (SSYMKVSICLPMDVESTLSQ). The chain crosses the membrane as a helical span at residues 530–551 (VYILSILLLNAVAFVVICACYV). The Cytoplasmic portion of the chain corresponds to 552–574 (RIYFAVQNPELTAPNKDTKIAKK). Residues 575–598 (MAILIFTDFTCMAPISFFAISAAF) traverse the membrane as a helical segment. Residues 599-609 (KVPLITVTNSK) are Extracellular-facing. The helical transmembrane segment at 610-631 (VLLVLFYPVNSCANPFLYAVFT) threads the bilayer. Over 632–700 (KAFQRDFFLL…QPTPPRVLIQ (69 aa)) the chain is Cytoplasmic. S-palmitoyl cysteine attachment occurs at residues C647 and C648.

This sequence belongs to the G-protein coupled receptor 1 family. FSH/LSH/TSH subfamily. Sulfated.

It is found in the cell membrane. Functionally, receptor for lutropin-choriogonadotropic hormone. The activity of this receptor is mediated by G proteins which activate adenylate cyclase. This is Lutropin-choriogonadotropic hormone receptor (Lhcgr) from Mus musculus (Mouse).